The chain runs to 565 residues: Beta-hexosaminidase subunit beta (565 aa).

A signal peptide spans 1–13; the sequence is MIVLLLLISYCFA. Asn-71 carries an N-linked (GlcNAc...) asparagine glycan. Residue Glu-347 is the Proton donor of the active site.

The protein belongs to the glycosyl hydrolase 20 family. In terms of assembly, heterodimer of one alpha subunit and one beta subunit. Glycosylated.

It is found in the cytoplasmic granule. It localises to the secreted. It catalyses the reaction Hydrolysis of terminal non-reducing N-acetyl-D-hexosamine residues in N-acetyl-beta-D-hexosaminides.. Its function is as follows. Hydrolyzes the non-reducing end N-acetyl-D-hexosamine and/or sulfated N-acetyl-D-hexosamine of glycoconjugates. May contribute to amoebic pathogenicity and may be involved in the destruction of extracellular matrix components. This chain is Beta-hexosaminidase subunit beta, found in Entamoeba histolytica (strain ATCC 30459 / HM-1:IMSS / ABRM).